The following is a 613-amino-acid chain: Dihydroxy-acid dehydratase (613 aa).

D81 is a binding site for Mg(2+). Residue C122 coordinates [2Fe-2S] cluster. The Mg(2+) site is built by D123 and K124. An N6-carboxylysine modification is found at K124. C195 is a [2Fe-2S] cluster binding site. E491 is a binding site for Mg(2+). The active-site Proton acceptor is S517.

This sequence belongs to the IlvD/Edd family. As to quaternary structure, homodimer. The cofactor is [2Fe-2S] cluster. Mg(2+) is required as a cofactor.

The catalysed reaction is (2R)-2,3-dihydroxy-3-methylbutanoate = 3-methyl-2-oxobutanoate + H2O. It catalyses the reaction (2R,3R)-2,3-dihydroxy-3-methylpentanoate = (S)-3-methyl-2-oxopentanoate + H2O. Its pathway is amino-acid biosynthesis; L-isoleucine biosynthesis; L-isoleucine from 2-oxobutanoate: step 3/4. The protein operates within amino-acid biosynthesis; L-valine biosynthesis; L-valine from pyruvate: step 3/4. In terms of biological role, functions in the biosynthesis of branched-chain amino acids. Catalyzes the dehydration of (2R,3R)-2,3-dihydroxy-3-methylpentanoate (2,3-dihydroxy-3-methylvalerate) into 2-oxo-3-methylpentanoate (2-oxo-3-methylvalerate) and of (2R)-2,3-dihydroxy-3-methylbutanoate (2,3-dihydroxyisovalerate) into 2-oxo-3-methylbutanoate (2-oxoisovalerate), the penultimate precursor to L-isoleucine and L-valine, respectively. This chain is Dihydroxy-acid dehydratase, found in Vibrio atlanticus (strain LGP32) (Vibrio splendidus (strain Mel32)).